Reading from the N-terminus, the 206-residue chain is Platelet glycoprotein Ib beta chain (206 aa).

The signal sequence occupies residues 1-25 (MGSGPRGALSLLLLLLAPPSRPAAG). Intrachain disulfides connect Cys26–Cys32 and Cys30–Cys39. Positions 27-55 (PAPCSCAGTLVDCGRRGLTWASLPTAFPV) constitute an LRRNT domain. The Extracellular segment spans residues 27–147 (PAPCSCAGTL…RAACAPGPLC (121 aa)). The LRR repeat unit spans residues 60–83 (LVLTGNNLTALPPGLLDALPALRT). Asn66 is a glycosylation site (N-linked (GlcNAc...) asparagine). Residues 89 to 143 (NPWRCDCRLVPLRAWLAGRPERAPYRDLRCVAPPALRGRLLPYLAEDELRAACAP) enclose the LRRCT domain. Disulfide bonds link Cys93/Cys118 and Cys95/Cys141. The chain crosses the membrane as a helical span at residues 148–172 (WGALAAQLALLGLGLLHALLLVLLL). Residues 173–206 (CRLRRLRARARARAAARLSLTDPLVAERAGTDES) are Cytoplasmic-facing. Phosphoserine; by PKA is present on Ser191. Thr193 is modified (phosphothreonine).

In terms of assembly, two GP-Ib beta are disulfide-linked to one GP-Ib alpha. GP-IX is complexed with the GP-Ib heterodimer via a non covalent linkage. Interacts with TRAF4. As to expression, expressed in heart and brain.

It localises to the membrane. Gp-Ib, a surface membrane protein of platelets, participates in the formation of platelet plugs by binding to von Willebrand factor, which is already bound to the subendothelium. This chain is Platelet glycoprotein Ib beta chain (GP1BB), found in Homo sapiens (Human).